A 360-amino-acid chain; its full sequence is Phospho-N-acetylmuramoyl-pentapeptide-transferase (360 aa).

10 helical membrane-spanning segments follow: residues 26–46 (AVLS…KMIL), 73–93 (TMGG…WGDL), 94–114 (SNPY…IGFV), 132–152 (WKYF…YMIG), 168–188 (IMPQ…VGTS), 199–219 (GLAI…AWAT), 239–259 (LVIF…FNTY), 263–283 (VFMG…IAVL), 288–308 (FLLV…ILQV), and 338–358 (VIIR…VTLK).

This sequence belongs to the glycosyltransferase 4 family. MraY subfamily. The cofactor is Mg(2+).

Its subcellular location is the cell inner membrane. It carries out the reaction UDP-N-acetyl-alpha-D-muramoyl-L-alanyl-gamma-D-glutamyl-meso-2,6-diaminopimeloyl-D-alanyl-D-alanine + di-trans,octa-cis-undecaprenyl phosphate = di-trans,octa-cis-undecaprenyl diphospho-N-acetyl-alpha-D-muramoyl-L-alanyl-D-glutamyl-meso-2,6-diaminopimeloyl-D-alanyl-D-alanine + UMP. It participates in cell wall biogenesis; peptidoglycan biosynthesis. In terms of biological role, catalyzes the initial step of the lipid cycle reactions in the biosynthesis of the cell wall peptidoglycan: transfers peptidoglycan precursor phospho-MurNAc-pentapeptide from UDP-MurNAc-pentapeptide onto the lipid carrier undecaprenyl phosphate, yielding undecaprenyl-pyrophosphoryl-MurNAc-pentapeptide, known as lipid I. This chain is Phospho-N-acetylmuramoyl-pentapeptide-transferase, found in Actinobacillus succinogenes (strain ATCC 55618 / DSM 22257 / CCUG 43843 / 130Z).